The sequence spans 177 residues: Alkyl hydroperoxide reductase AhpD (177 aa).

Catalysis depends on cysteine 130, which acts as the Proton donor. Cysteine 130 and cysteine 133 are oxidised to a cystine. Residue cysteine 133 is the Cysteine sulfenic acid (-SOH) intermediate of the active site.

It belongs to the AhpD family. Homotrimer.

The enzyme catalyses N(6)-[(R)-dihydrolipoyl]-L-lysyl-[lipoyl-carrier protein] + a hydroperoxide = N(6)-[(R)-lipoyl]-L-lysyl-[lipoyl-carrier protein] + an alcohol + H2O. Functionally, antioxidant protein with alkyl hydroperoxidase activity. Required for the reduction of the AhpC active site cysteine residues and for the regeneration of the AhpC enzyme activity. In Mycolicibacterium smegmatis (strain ATCC 700084 / mc(2)155) (Mycobacterium smegmatis), this protein is Alkyl hydroperoxide reductase AhpD.